Here is a 171-residue protein sequence, read N- to C-terminus: Co-chaperone protein HscB (171 aa).

A J domain is found at 2–74 (DYFTFFGLPA…LMRAEYLLSL (73 aa)).

This sequence belongs to the HscB family. In terms of assembly, interacts with HscA and stimulates its ATPase activity. Interacts with IscU.

Its function is as follows. Co-chaperone involved in the maturation of iron-sulfur cluster-containing proteins. Seems to help targeting proteins to be folded toward HscA. This chain is Co-chaperone protein HscB, found in Shigella sonnei (strain Ss046).